Consider the following 446-residue polypeptide: StAR-related lipid transfer protein 3 (446 aa).

Over 1–52 (MSKRPGDLACDLERSLPALASLGTSLSHSQSLSSHFIPPPLEKRRAISDVRR) the chain is Cytoplasmic. Positions 47–218 (ISDVRRTFCL…YSPPESFAGS (172 aa)) constitute an MENTAL domain. Residues 53–73 (TFCLFVTFDLLFISLLWIIEL) form a helical membrane-spanning segment. The Extracellular portion of the chain corresponds to 74 to 95 (NTNTGIRKNLEQEVIHYSFQSS). The helical transmembrane segment at 96-116 (FFDIFVLAFFRFSGLLLGYAV) threads the bilayer. Residues 117–121 (LRLQH) lie on the Cytoplasmic side of the membrane. The helical transmembrane segment at 122–142 (WWVIAVTTLVSSAFLIVKVIL) threads the bilayer. At 143–149 (SELLSKG) the chain is on the extracellular side. Residues 150–170 (AFGYLLPIVSFVLAWLETWFL) traverse the membrane as a helical segment. At 171 to 446 (DFKVLPQEAE…QRVGELGARA (276 aa)) the chain is on the cytoplasmic side. An FFAT motif is present at residues 207 to 213 (QFYSPPE). Ser-210, Ser-218, and Ser-222 each carry phosphoserine. Residues 231 to 444 (SFSAQEREYI…LRQRVGELGA (214 aa)) enclose the START domain.

Belongs to the STARD3 family. As to quaternary structure, homodimer. Interacts (via the MENTAL domain) with STARD3NL. Interacts (via phosphorylated FFAT motif) with VAPA (via MSP domain). Interacts (via phosphorylated FFAT motif) with VAPB (via MSP domain). Interacts (via phosphorylated FFAT motif) with MOSPD2 (via MSP domain); this interaction allows enrichment of MOSPD2 around endosomes. In terms of processing, phosphorylation at Ser-210 is necessary and sufficient for the direct interaction of the phosphorylated FFAT motif with the MSP domain of MOSPD2, VAPA and VAPB and allows the tethering of two membranes that participates in the formation of ER-endosome contacts. Phosphorylation of the FFAT motif leads to conformation changes. Additional phosphorylations around the core FFAT motif (QFYSPPE) are not essential but strengthen the interaction with MOSPD2, VAPA and VAPB. Phosphorylation at Ser-210 of FFAT motif drives membrane tethering between the endoplasmic reticulum and late endosomes via interaction with VAPA and VAPB that in turn allows the efficient transport of sterol mediated by the START domain.

The protein localises to the late endosome membrane. The catalysed reaction is cholesterol(in) = cholesterol(out). Sterol-binding protein that mediates cholesterol transport from the endoplasmic reticulum to endosomes. The sterol transport mechanism is triggered by phosphorylation of FFAT motif that leads to membrane tethering between the endoplasmic reticulum and late endosomes via interaction with VAPA and VAPB. Acts as a lipid transfer protein that redirects sterol to the endosome at the expense of the cell membrane and favors membrane formation inside endosomes. May also mediate cholesterol transport between other membranes, such as mitochondria membrane or cell membrane. However, such results need additional experimental evidences; probably mainly mediates cholesterol transport from the endoplasmic reticulum to endosomes. Does not activate transcriptional cholesterol sensing. Able to bind other lipids, such as lutein, a xanthophyll carotenoids that form the macular pigment of the retina. The protein is StAR-related lipid transfer protein 3 of Mus musculus (Mouse).